A 451-amino-acid polypeptide reads, in one-letter code: Signal transduction histidine-protein kinase ArlS (451 aa).

Helical transmembrane passes span 11 to 31 and 156 to 176; these read IIVTTMITFVTIFLFCLIIIF and IIALAFGVIATIITATISYVF. Positions 178–231 constitute an HAMP domain; the sequence is TQITKPLVSLSNKMIEIRRDGFQNKLQLNTNYEEIDNLANTFNEMMSQIEESFN. The region spanning 239–451 is the Histidine kinase domain; the sequence is DASHELRTPL…NKGTTFKIIF (213 aa). H242 is modified (phosphohistidine; by autocatalysis).

In terms of processing, autophosphorylated.

It localises to the cell membrane. It catalyses the reaction ATP + protein L-histidine = ADP + protein N-phospho-L-histidine.. Functionally, member of the two-component regulatory system ArlS/ArlR involved in the regulation of adhesion, autolysis, multidrug resistance and virulence. ArlS probably functions as a sensor protein kinase which is autophosphorylated at a histidine residue and transfers its phosphate group to ArlR. This chain is Signal transduction histidine-protein kinase ArlS (arlS), found in Staphylococcus aureus (strain bovine RF122 / ET3-1).